A 498-amino-acid polypeptide reads, in one-letter code: Acetyl-coenzyme A carboxylase carboxyl transferase subunit beta, chloroplastic (498 aa).

One can recognise a CoA carboxyltransferase N-terminal domain in the interval 228–498; sequence LWVQCEICYG…LNHNLSRTLT (271 aa). The Zn(2+) site is built by Cys-232, Cys-235, Cys-251, and Cys-254. The segment at 232-254 adopts a C4-type zinc-finger fold; the sequence is CEICYGLNYKKFFKSKMNICEQC.

It belongs to the AccD/PCCB family. Acetyl-CoA carboxylase is a heterohexamer composed of biotin carboxyl carrier protein, biotin carboxylase and 2 subunits each of ACCase subunit alpha and ACCase plastid-coded subunit beta (accD). The cofactor is Zn(2+).

Its subcellular location is the plastid. The protein resides in the chloroplast stroma. It carries out the reaction N(6)-carboxybiotinyl-L-lysyl-[protein] + acetyl-CoA = N(6)-biotinyl-L-lysyl-[protein] + malonyl-CoA. It participates in lipid metabolism; malonyl-CoA biosynthesis; malonyl-CoA from acetyl-CoA: step 1/1. Component of the acetyl coenzyme A carboxylase (ACC) complex. Biotin carboxylase (BC) catalyzes the carboxylation of biotin on its carrier protein (BCCP) and then the CO(2) group is transferred by the transcarboxylase to acetyl-CoA to form malonyl-CoA. The chain is Acetyl-coenzyme A carboxylase carboxyl transferase subunit beta, chloroplastic from Populus trichocarpa (Western balsam poplar).